The chain runs to 528 residues: UDP-glucuronosyltransferase 2B30 (528 aa).

The first 23 residues, 1–23 (MSMKWTSALLLIQLSCYLSSGNC), serve as a signal peptide directing secretion. Lys-135 bears the N6-succinyllysine mark. A glycan (N-linked (GlcNAc...) asparagine) is linked at Asn-315. The helical transmembrane segment at 493-513 (VIGFLLACVATVIFIITKCLF) threads the bilayer.

The protein belongs to the UDP-glycosyltransferase family. In terms of tissue distribution, expressed in several tissues, including prostate, testis, mammary gland, kidney, adrenals and intestine.

The protein localises to the microsome membrane. It is found in the endoplasmic reticulum membrane. The enzyme catalyses glucuronate acceptor + UDP-alpha-D-glucuronate = acceptor beta-D-glucuronoside + UDP + H(+). UDPGTs are of major importance in the conjugation and subsequent elimination of potentially toxic xenobiotics and endogenous compounds. This isozyme has glucuronidating capacity on testosterone, dihydrotestosterone, 5-alpha-androstane-3-alpha,17-beta-diol, androsterone, oestradiol, tetrahydroaldosterone and tetrahydrocortisone. This enzyme is essential to inactivation of several steroids. The chain is UDP-glucuronosyltransferase 2B30 (UGT2B30) from Macaca fascicularis (Crab-eating macaque).